The primary structure comprises 314 residues: Lysophospholipase D GDPD1 (314 aa).

Topologically, residues 1-3 are extracellular; that stretch reads MSS. The helical transmembrane segment at 4-24 threads the bilayer; sequence TAAFCLLSTLGGYLVTSFLLL. Topologically, residues 25-195 are cytoplasmic; that stretch reads KYPALLHQRK…VDKCYKENSD (171 aa). The GP-PDE domain occupies 40–309; sequence SRHISHRGGA…DYPTKLKEFL (270 aa). 3 residues coordinate a divalent metal cation: Glu-72, Asp-74, and His-87. The helical transmembrane segment at 196-216 threads the bilayer; sequence IPILFSLQRVLLILGLFFTGL. Over 217 to 314 the chain is Extracellular; sequence LPFVPIREQF…LKEFLNNMSA (98 aa).

The protein belongs to the glycerophosphoryl diester phosphodiesterase family.

It is found in the cytoplasm. The protein localises to the membrane. It localises to the perinuclear region. Its subcellular location is the endoplasmic reticulum. It carries out the reaction a 1-O-alkyl-sn-glycero-3-phosphocholine + H2O = a 1-O-alkyl-sn-glycero-3-phosphate + choline + H(+). The catalysed reaction is 1-hexadecanoyl-sn-glycero-3-phosphocholine + H2O = 1-hexadecanoyl-sn-glycero-3-phosphate + choline + H(+). The enzyme catalyses 1-hexadecanoyl-sn-glycero-3-phosphoethanolamine + H2O = 1-hexadecanoyl-sn-glycero-3-phosphate + ethanolamine + H(+). It catalyses the reaction N-hexadecanoyl-sn-glycero-3-phosphoethanolamine + H2O = N-hexadecanoylethanolamine + sn-glycerol 3-phosphate + H(+). It carries out the reaction N-(5Z,8Z,11Z,14Z-eicosatetraenoyl)-1-(9Z-octadecenoyl)-sn-glycero-3-phosphoethanolamine + H2O = N-(5Z,8Z,11Z,14Z-eicosatetraenoyl)-ethanolamine + 1-(9Z-octadecenoyl)-sn-glycero-3-phosphate + H(+). The catalysed reaction is N,1-di-(9Z-octadecenoyl)-sn-glycero-3-phosphoethanolamine + H2O = N-(9Z-octadecenoyl) ethanolamine + 1-(9Z-octadecenoyl)-sn-glycero-3-phosphate + H(+). The enzyme catalyses N-hexadecanoyl-1-(9Z-octadecenoyl)-sn-glycero-3-phosphoethanolamine + H2O = N-hexadecanoylethanolamine + 1-(9Z-octadecenoyl)-sn-glycero-3-phosphate + H(+). It catalyses the reaction 1-O-hexadecyl-sn-glycero-3-phosphocholine + H2O = 1-O-hexadecyl-sn-glycero-3-phosphate + choline + H(+). It carries out the reaction 1-(9Z-octadecenoyl)-sn-glycero-3-phosphocholine + H2O = 1-(9Z-octadecenoyl)-sn-glycero-3-phosphate + choline + H(+). The catalysed reaction is N,1-dihexadecanoyl-sn-glycero-3-phosphoethanolamine + H2O = N-hexadecanoylethanolamine + 1-hexadecanoyl-sn-glycero-3-phosphate + H(+). The enzyme catalyses 1-O-(1Z-octadecenyl)-sn-glycero-3-phospho-(N-5Z,8Z,11Z,14Z-eicosatetraenoyl)-ethanolamine + H2O = 1-O-(1Z-octadecenyl)-sn-glycero-3-phosphate + N-(5Z,8Z,11Z,14Z-eicosatetraenoyl)-ethanolamine + H(+). It catalyses the reaction 1-O-(1Z-octadecenyl)-sn-glycero-3-phospho-(N-9Z-octadecenoyl)-ethanolamine + H2O = 1-O-(1Z-octadecenyl)-sn-glycero-3-phosphate + N-(9Z-octadecenoyl) ethanolamine + H(+). It carries out the reaction 1-O-(1Z-octadecenyl)-sn-glycero-3-phospho-N-hexadecanoyl-ethanolamine + H2O = 1-O-(1Z-octadecenyl)-sn-glycero-3-phosphate + N-hexadecanoylethanolamine + H(+). Lysophospholipase D activity is increased by magnesium and manganese and inhibited by calcium in a concentration dependent manner. Loss of lysophospholipase D activity by addition of EDTA. Functionally, hydrolyzes lysoglycerophospholipids to produce lysophosphatidic acid (LPA) and the corresponding amines. Shows a preference for 1-O-alkyl-sn-glycero-3-phosphocholine (lyso-PAF), lysophosphatidylethanolamine (lyso-PE) and lysophosphatidylcholine (lyso-PC). May be involved in bioactive N-acylethanolamine biosynthesis from both N-acyl-lysoplasmenylethanolamin (N-acyl-lysoPlsEt) and N-acyl-lysophosphatidylethanolamin (N-acyl-lysoPE). In addition, hydrolyzes glycerophospho-N-acylethanolamine to N-acylethanolamine. Does not display glycerophosphodiester phosphodiesterase activity, since it cannot hydrolyze either glycerophosphoinositol or glycerophosphocholine. The protein is Lysophospholipase D GDPD1 of Rattus norvegicus (Rat).